The following is a 40-amino-acid chain: Photosystem II reaction center protein J (40 aa).

The chain crosses the membrane as a helical span at residues 8–28 (IPLWVIGTVAGIPVIGLIGIF).

The protein belongs to the PsbJ family. As to quaternary structure, PSII is composed of 1 copy each of membrane proteins PsbA, PsbB, PsbC, PsbD, PsbE, PsbF, PsbH, PsbI, PsbJ, PsbK, PsbL, PsbM, PsbT, PsbX, PsbY, PsbZ, Psb30/Ycf12, at least 3 peripheral proteins of the oxygen-evolving complex and a large number of cofactors. It forms dimeric complexes.

It localises to the plastid. It is found in the chloroplast thylakoid membrane. Functionally, one of the components of the core complex of photosystem II (PSII). PSII is a light-driven water:plastoquinone oxidoreductase that uses light energy to abstract electrons from H(2)O, generating O(2) and a proton gradient subsequently used for ATP formation. It consists of a core antenna complex that captures photons, and an electron transfer chain that converts photonic excitation into a charge separation. The polypeptide is Photosystem II reaction center protein J (Nasturtium officinale (Watercress)).